Reading from the N-terminus, the 152-residue chain is DNA-binding transcriptional activator DecR (152 aa).

Residues 2–63 form the HTH asnC-type domain; it reads LDKIDRKLLA…LLDPEKIGLG (62 aa). The segment at residues 21 to 40 is a DNA-binding region (H-T-H motif); it reads LQALAEAVNLTTTPCWKRLK.

Its function is as follows. Plays a role in L-cysteine detoxification. Binds to the dlsT(yhaO)-yhaM operon promoter in the presence but not absence of L-cysteine; activates transcription from the dlsT(yhaO)-yhaM operon. The polypeptide is DNA-binding transcriptional activator DecR (decR) (Escherichia coli O157:H7).